Here is a 335-residue protein sequence, read N- to C-terminus: Ketol-acid reductoisomerase (NADP(+)) (335 aa).

Positions 1–182 (MATIIYDDET…GATRAGVYET (182 aa)) constitute a KARI N-terminal Rossmann domain. NADP(+)-binding positions include 25–28 (YGSQ), Arg48, Ser51, Ser53, and 83–86 (DEKQ). His108 is a catalytic residue. Gly134 provides a ligand contact to NADP(+). A KARI C-terminal knotted domain is found at 183–328 (TFREETETDL…KQIRANIPWL (146 aa)). Mg(2+)-binding residues include Asp191, Glu195, Glu227, and Glu231. Residue Ser252 coordinates substrate.

This sequence belongs to the ketol-acid reductoisomerase family. Mg(2+) is required as a cofactor.

It catalyses the reaction (2R)-2,3-dihydroxy-3-methylbutanoate + NADP(+) = (2S)-2-acetolactate + NADPH + H(+). The enzyme catalyses (2R,3R)-2,3-dihydroxy-3-methylpentanoate + NADP(+) = (S)-2-ethyl-2-hydroxy-3-oxobutanoate + NADPH + H(+). It functions in the pathway amino-acid biosynthesis; L-isoleucine biosynthesis; L-isoleucine from 2-oxobutanoate: step 2/4. The protein operates within amino-acid biosynthesis; L-valine biosynthesis; L-valine from pyruvate: step 2/4. Involved in the biosynthesis of branched-chain amino acids (BCAA). Catalyzes an alkyl-migration followed by a ketol-acid reduction of (S)-2-acetolactate (S2AL) to yield (R)-2,3-dihydroxy-isovalerate. In the isomerase reaction, S2AL is rearranged via a Mg-dependent methyl migration to produce 3-hydroxy-3-methyl-2-ketobutyrate (HMKB). In the reductase reaction, this 2-ketoacid undergoes a metal-dependent reduction by NADPH to yield (R)-2,3-dihydroxy-isovalerate. This is Ketol-acid reductoisomerase (NADP(+)) from Methanosarcina mazei (strain ATCC BAA-159 / DSM 3647 / Goe1 / Go1 / JCM 11833 / OCM 88) (Methanosarcina frisia).